The chain runs to 151 residues: Urease accessory protein UreE (151 aa).

It belongs to the UreE family.

It is found in the cytoplasm. Functionally, involved in urease metallocenter assembly. Binds nickel. Probably functions as a nickel donor during metallocenter assembly. The chain is Urease accessory protein UreE from Lachnoclostridium phytofermentans (strain ATCC 700394 / DSM 18823 / ISDg) (Clostridium phytofermentans).